Here is a 621-residue protein sequence, read N- to C-terminus: Chaperone protein HtpG (621 aa).

The interval 1–328 is a; substrate-binding; that stretch reads MIQEKKKFDA…SEDLPLNISR (328 aa). Residues 329-544 are b; that stretch reads ESLQHNSVLE…DAAMDIRMER (216 aa). The segment at 475 to 494 is disordered; it reads SDIDVEQTTSQSEAKNTDSK. The segment at 545–621 is c; sequence FLIEQKQIAN…LNDIVQKAIL (77 aa).

This sequence belongs to the heat shock protein 90 family. In terms of assembly, homodimer.

It is found in the cytoplasm. Molecular chaperone. Has ATPase activity. The protein is Chaperone protein HtpG of Rickettsia rickettsii (strain Iowa).